Reading from the N-terminus, the 734-residue chain is 1,4-alpha-glucan branching enzyme GlgB (734 aa).

The Nucleophile role is filled by aspartate 414. The active-site Proton donor is the glutamate 467.

This sequence belongs to the glycosyl hydrolase 13 family. GlgB subfamily. As to quaternary structure, monomer.

The catalysed reaction is Transfers a segment of a (1-&gt;4)-alpha-D-glucan chain to a primary hydroxy group in a similar glucan chain.. It functions in the pathway glycan biosynthesis; glycogen biosynthesis. In terms of biological role, catalyzes the formation of the alpha-1,6-glucosidic linkages in glycogen by scission of a 1,4-alpha-linked oligosaccharide from growing alpha-1,4-glucan chains and the subsequent attachment of the oligosaccharide to the alpha-1,6 position. The polypeptide is 1,4-alpha-glucan branching enzyme GlgB (Myxococcus xanthus (strain DK1622)).